A 364-amino-acid chain; its full sequence is Chorismate synthase (364 aa).

Arg-48 serves as a coordination point for NADP(+). Residues 131–133 (RSS), 243–244 (NA), Gly-288, 303–307 (KPTSS), and Arg-329 each bind FMN.

It belongs to the chorismate synthase family. As to quaternary structure, homotetramer. Requires FMNH2 as cofactor.

It carries out the reaction 5-O-(1-carboxyvinyl)-3-phosphoshikimate = chorismate + phosphate. It participates in metabolic intermediate biosynthesis; chorismate biosynthesis; chorismate from D-erythrose 4-phosphate and phosphoenolpyruvate: step 7/7. Its function is as follows. Catalyzes the anti-1,4-elimination of the C-3 phosphate and the C-6 proR hydrogen from 5-enolpyruvylshikimate-3-phosphate (EPSP) to yield chorismate, which is the branch point compound that serves as the starting substrate for the three terminal pathways of aromatic amino acid biosynthesis. This reaction introduces a second double bond into the aromatic ring system. This chain is Chorismate synthase, found in Brucella anthropi (strain ATCC 49188 / DSM 6882 / CCUG 24695 / JCM 21032 / LMG 3331 / NBRC 15819 / NCTC 12168 / Alc 37) (Ochrobactrum anthropi).